The following is a 603-amino-acid chain: Flavin-dependent halogenase chlA (603 aa).

The FAD site is built by Gly-16, Ala-19, and Glu-59. Positions 352 and 353 each coordinate chloride.

It belongs to the flavin-dependent halogenase family.

It catalyses the reaction 2,4,6-trihydroxyphenylhexan-1-one + FADH2 + chloride + O2 = (3-chloro-2,4,6-trihydroxyphenyl)hexan-1-one + FAD + 2 H2O + H(+). The enzyme catalyses (3-chloro-2,4,6-trihydroxyphenyl)hexan-1-one + FADH2 + chloride + O2 = (3,5-dichloro-2,4,6-trihydroxyphenyl)hexan-1-one + FAD + 2 H2O. Functionally, flavin-dependent halogenase; part of the gene cluster that mediates the biosynthesis of DIF-1 (Differentiation Inducing Factor-1), a signal molecule involved in the differentiation of pstO (prestalk-O) cells. The three-step process begins with the formation of (2,4,6-trihydroxyphenyl)-1-hexan-1-one (THPH) by the polyketide synthase StlB. THPH is then dichlorinated by the flavin-dependent halogenase ChlA. The last step of DIF-1 biosynthesis is the O-methylation of dichloro-THPH (or des-methyl-DIF-1) by the methyltransferase DmtA to yield DIF-1. The chain is Flavin-dependent halogenase chlA from Dictyostelium discoideum (Social amoeba).